The chain runs to 251 residues: MRDAETQGLVLYSRNYKEKDKLVKIFTESFGKRMFFVKNFGKSSYASSLQAFTDGKLTATINDGGFSFIEDVSEVVVYKNISADIFINAHASYIISLADAAISDNQYDPALYGFLKRSLELLDQGFDMEVVTNIFELQVLHRFGVSLNFSECAFCHKTVGPFDFSYKFSGCLCPRHFDEDLRRSHLDPNVIYLINLFQEISLDELKKISIKAEMKAKIRQFIDGLYDEYVGIHLKSKKFLDGMSGWADIMK.

It belongs to the RecO family.

Functionally, involved in DNA repair and RecF pathway recombination. The polypeptide is DNA repair protein RecO (Lactococcus lactis subsp. cremoris (strain SK11)).